The sequence spans 116 residues: Small ribosomal subunit protein bS16 (116 aa).

It belongs to the bacterial ribosomal protein bS16 family.

This Chlamydia trachomatis serovar L2 (strain ATCC VR-902B / DSM 19102 / 434/Bu) protein is Small ribosomal subunit protein bS16.